The chain runs to 331 residues: Adenosine deaminase (331 aa).

Zn(2+) is bound by residues His12 and His14. His14, Asp16, and Gly170 together coordinate substrate. His197 contacts Zn(2+). Glu200 acts as the Proton donor in catalysis. Asp278 contacts Zn(2+).

Belongs to the metallo-dependent hydrolases superfamily. Adenosine and AMP deaminases family. Adenosine deaminase subfamily. Zn(2+) is required as a cofactor.

It carries out the reaction adenosine + H2O + H(+) = inosine + NH4(+). The catalysed reaction is 2'-deoxyadenosine + H2O + H(+) = 2'-deoxyinosine + NH4(+). Catalyzes the hydrolytic deamination of adenosine and 2-deoxyadenosine. This Shewanella woodyi (strain ATCC 51908 / MS32) protein is Adenosine deaminase.